The primary structure comprises 116 residues: Probable non-functional immunoglobulin kappa variable 3-7 (116 aa).

The signal sequence occupies residues 1 to 21; sequence MEAPAQLLFLLLLWLPDTTRE. The framework-1 stretch occupies residues 21–43; it reads EIVMTQSPPTLSLSPGERVTLSC. An Ig-like domain is found at 22–116; that stretch reads IVMTQSPPTL…YYCQQDYNLP (95 aa). The cysteines at positions 43 and 109 are disulfide-linked. The segment at 44-55 is complementarity-determining-1; the sequence is RASQSVSSSYLT. The segment at 56-70 is framework-2; that stretch reads WYQQKPGQAPRLLIY. Positions 71 to 77 are complementarity-determining-2; sequence GASTRAT. Positions 78 to 109 are framework-3; it reads SIPARFSGSGSGTDFTLTISSLQPEDFAVYYC. The tract at residues 110 to 116 is complementarity-determining-3; sequence QQDYNLP.

Immunoglobulins are composed of two identical heavy chains and two identical light chains; disulfide-linked.

Its subcellular location is the secreted. It localises to the cell membrane. Its function is as follows. Probable non-functional open reading frame (ORF) of V region of the variable domain of immunoglobulin light chains. Non-functional ORF generally cannot participate in the synthesis of a productive immunoglobulin chain due to altered V-(D)-J or switch recombination and/or splicing site (at mRNA level) and/or conserved amino acid change (protein level). Immunoglobulins, also known as antibodies, are membrane-bound or secreted glycoproteins produced by B lymphocytes. In the recognition phase of humoral immunity, the membrane-bound immunoglobulins serve as receptors which, upon binding of a specific antigen, trigger the clonal expansion and differentiation of B lymphocytes into immunoglobulins-secreting plasma cells. Secreted immunoglobulins mediate the effector phase of humoral immunity, which results in the elimination of bound antigens. The antigen binding site is formed by the variable domain of one heavy chain, together with that of its associated light chain. Thus, each immunoglobulin has two antigen binding sites with remarkable affinity for a particular antigen. The variable domains are assembled by a process called V-(D)-J rearrangement and can then be subjected to somatic hypermutations which, after exposure to antigen and selection, allow affinity maturation for a particular antigen. This is Probable non-functional immunoglobulin kappa variable 3-7 from Homo sapiens (Human).